The following is a 169-amino-acid chain: Large ribosomal subunit protein uL10 (169 aa).

The protein belongs to the universal ribosomal protein uL10 family. Part of the ribosomal stalk of the 50S ribosomal subunit. The N-terminus interacts with L11 and the large rRNA to form the base of the stalk. The C-terminus forms an elongated spine to which L12 dimers bind in a sequential fashion forming a multimeric L10(L12)X complex.

Functionally, forms part of the ribosomal stalk, playing a central role in the interaction of the ribosome with GTP-bound translation factors. The chain is Large ribosomal subunit protein uL10 from Rickettsia massiliae (strain Mtu5).